The chain runs to 313 residues: MKILLLLIPLVLTACGTLTGIPAHGGGKRFAVEQELVAASSRAAVKEMDLSALKGRKAALYVSVMGDQGSGNISGGRYSIDALIRGGYHNNPESATQYSYPAYDTTATTKSDALSSVTTSTSVLNAPAAALTRNSGRKGERSAGLSVNGTGDYRNETLLANPRDVSFLTNLIQTVFYLRGIEVVPPEYADTDVFVTVDVFGTVRSRTELHLYNAETLKAQTKLEYFAVDRDSRKLLIAPKTAAYESQYQEQYALWMGPYSVGKTVKASDRLMVDFSDITPYGDTTAQNRPDFKQNNGKNPDVGNEVIRRRKGG.

An N-terminal signal peptide occupies residues 1–14 (MKILLLLIPLVLTA). Cys15 is lipidated: N-palmitoyl cysteine. Residue Cys15 is the site of S-diacylglycerol cysteine attachment. A compositionally biased stretch (polar residues) spans 282-298 (GDTTAQNRPDFKQNNGK). Residues 282–313 (GDTTAQNRPDFKQNNGKNPDVGNEVIRRRKGG) are disordered.

It belongs to the MafA family.

The protein localises to the cell outer membrane. In Neisseria meningitidis serogroup C / serotype 2a (strain ATCC 700532 / DSM 15464 / FAM18), this protein is Adhesin MafA 1 (mafA1).